We begin with the raw amino-acid sequence, 540 residues long: Cytochrome P450 monooxygenase CYP3 (540 aa).

Asn-2 is a glycosylation site (N-linked (GlcNAc...) asparagine). The chain crosses the membrane as a helical span at residues 26-46 (IFGLSSSTLVVLVAMIAVSTL). N-linked (GlcNAc...) asparagine glycosylation is found at Asn-100, Asn-210, and Asn-400. Residue Cys-471 participates in heme binding.

This sequence belongs to the cytochrome P450 family. The cofactor is heme.

The protein localises to the membrane. It participates in secondary metabolite biosynthesis. Cytochrome P450 monooxygenase; part of the gene cluster that mediates the biosynthesis of itaconic acid and 2-hydroxyparaconate. Cis-aconitate is secreted by the mitochondrial tricarboxylate transporter MTT1. In the cytosol cis-aconitate is converted into trans-aconitate via isomerization by the aconitate-delta-isomerase ADI1. Decarboxylation of trans-aconitate by the trans-aconitate decarboxylase TAD1 then leads then to the production of itaconic acid. The cytochrome P450 monooxygenase CYP3 further converts itaconate to 2-hydroxyparaconate via oxidation of the double bond, leading to a transient epoxide, which can subsequently be lactonized to produce 2-hydroxyparaconate. Secretion of itaconate and possibly 2-hydroxyparaconate into the medium is mediated by the major facilitator ITP1. The glyoxalase domain-containing protein RDO1 is not involved in the biosynthesis of itaconate and 2-hydroxyparaconate, however, it might play a role in the further conversion of 2-hydroxyparaconate to itatartarate. This Mycosarcoma maydis (Corn smut fungus) protein is Cytochrome P450 monooxygenase CYP3.